The sequence spans 131 residues: MDKKTIYFICTGNSCRSQMAEGWGREILGEEWNVYSAGIETHGVNPKAIEAMKEVDIDISNHTSDLIDNKILRQSDLVVTLCSDADENCPVIPPNVKKEHWGFDDPAGKSWSEFQRVRDEIGQKIKQFYDN.

Active-site nucleophile residues include cysteine 10, cysteine 82, and cysteine 89. 2 cysteine pairs are disulfide-bonded: cysteine 10-cysteine 82 and cysteine 82-cysteine 89.

It belongs to the low molecular weight phosphotyrosine protein phosphatase family. Thioredoxin-coupled ArsC subfamily.

It is found in the cytoplasm. The enzyme catalyses arsenate + [thioredoxin]-dithiol + H(+) = arsenite + [thioredoxin]-disulfide + H2O. Its function is as follows. Catalyzes the reduction of arsenate [As(V)] to arsenite [As(III)]. The protein is Arsenate reductase 2 of Staphylococcus saprophyticus subsp. saprophyticus (strain ATCC 15305 / DSM 20229 / NCIMB 8711 / NCTC 7292 / S-41).